A 276-amino-acid polypeptide reads, in one-letter code: Bis(5'-nucleosyl)-tetraphosphatase, symmetrical (276 aa).

The protein belongs to the Ap4A hydrolase family.

The catalysed reaction is P(1),P(4)-bis(5'-adenosyl) tetraphosphate + H2O = 2 ADP + 2 H(+). Hydrolyzes diadenosine 5',5'''-P1,P4-tetraphosphate to yield ADP. This is Bis(5'-nucleosyl)-tetraphosphatase, symmetrical from Tolumonas auensis (strain DSM 9187 / NBRC 110442 / TA 4).